Here is a 232-residue protein sequence, read N- to C-terminus: Phosphatidylserine decarboxylase proenzyme (232 aa).

The active-site Schiff-base intermediate with substrate; via pyruvic acid is the Ser-190. A Pyruvic acid (Ser); by autocatalysis modification is found at Ser-190.

The protein belongs to the phosphatidylserine decarboxylase family. PSD-A subfamily. Heterodimer of a large membrane-associated beta subunit and a small pyruvoyl-containing alpha subunit. Pyruvate is required as a cofactor. Is synthesized initially as an inactive proenzyme. Formation of the active enzyme involves a self-maturation process in which the active site pyruvoyl group is generated from an internal serine residue via an autocatalytic post-translational modification. Two non-identical subunits are generated from the proenzyme in this reaction, and the pyruvate is formed at the N-terminus of the alpha chain, which is derived from the carboxyl end of the proenzyme. The post-translation cleavage follows an unusual pathway, termed non-hydrolytic serinolysis, in which the side chain hydroxyl group of the serine supplies its oxygen atom to form the C-terminus of the beta chain, while the remainder of the serine residue undergoes an oxidative deamination to produce ammonia and the pyruvoyl prosthetic group on the alpha chain.

Its subcellular location is the cell membrane. The enzyme catalyses a 1,2-diacyl-sn-glycero-3-phospho-L-serine + H(+) = a 1,2-diacyl-sn-glycero-3-phosphoethanolamine + CO2. The protein operates within phospholipid metabolism; phosphatidylethanolamine biosynthesis; phosphatidylethanolamine from CDP-diacylglycerol: step 2/2. Its function is as follows. Catalyzes the formation of phosphatidylethanolamine (PtdEtn) from phosphatidylserine (PtdSer). In Rhodopseudomonas palustris (strain BisB5), this protein is Phosphatidylserine decarboxylase proenzyme.